Here is a 1628-residue protein sequence, read N- to C-terminus: Centrosomal protein of 170 kDa protein B (1628 aa).

One can recognise an FHA domain in the interval 23 to 73 (IFVGREDCELMLQSRSVDKQHAVINYDSDKDEHRVKDLGSLNGTFVNDVRI). Disordered stretches follow at residues 136-201 (EHGA…DMTQ), 329-369 (LIRR…SEDP), 415-504 (PRKK…GKNY), 566-586 (SDVR…DAGT), 637-659 (LASE…KLSN), 719-739 (EHQG…LPQL), 758-842 (ESQR…KKST), 1005-1084 (VSLV…LDFT), 1100-1341 (TVSS…EDEQ), 1379-1405 (AGDG…TPAS), 1443-1463 (GSTG…DPSK), and 1560-1628 (HLDV…TYIV). Basic and acidic residues-rich tracts occupy residues 147-156 (KQDKADKKAT) and 180-201 (KLDK…DMTQ). The segment covering 421–434 (QSFTHNANSPQNDT) has biased composition (polar residues). Basic and acidic residues predominate over residues 436-453 (PVLKAKAEKRKGTLHVEK). Over residues 454-479 (VSTNGMGSTAPASKSLSSPSFPQRSN) the composition is skewed to polar residues. Residues 481–490 (FRREKTEDRI) are compositionally biased toward basic and acidic residues. Basic and acidic residues-rich tracts occupy residues 758–773 (ESQR…RISE) and 817–828 (WKGEESHSREPS). The span at 1005–1023 (VSLVSDKNVPSHSQKNRIV) shows a compositional bias: polar residues. Basic and acidic residues predominate over residues 1045-1056 (ARERLSEKRRTV). Polar residues predominate over residues 1129-1150 (RSSNAQKVQQALTRSNSLSTPR). Positions 1176-1193 (SNISPGTSSANSSSAKSS) are enriched in low complexity. The span at 1216 to 1227 (NVPSDSETTSSV) shows a compositional bias: polar residues. 3 stretches are compositionally biased toward low complexity: residues 1261-1280 (TQKQ…SSST), 1312-1328 (ASTA…SRRQ), and 1381-1398 (DGDS…SISS). Over residues 1564–1596 (PSSNKKTSSTILTSNPLSRTTNNSAARTESQTP) the composition is skewed to polar residues. The span at 1606-1618 (SSSSSSRSPGSSF) shows a compositional bias: low complexity.

The protein belongs to the CEP170 family.

Its subcellular location is the cytoplasm. It localises to the cytoskeleton. In terms of biological role, plays a role in microtubule organization. The chain is Centrosomal protein of 170 kDa protein B (cep170b) from Xenopus tropicalis (Western clawed frog).